A 450-amino-acid chain; its full sequence is Nicotinamide phosphoribosyltransferase (450 aa).

Residue Arg-210 coordinates diphosphate. Asp-233 is a binding site for beta-nicotinamide D-ribonucleotide. 2 residues coordinate diphosphate: His-249 and Arg-310. Beta-nicotinamide D-ribonucleotide contacts are provided by residues 310-312 (RAD), 364-365 (GD), and Arg-403.

This sequence belongs to the NAPRTase family.

The catalysed reaction is beta-nicotinamide D-ribonucleotide + diphosphate = 5-phospho-alpha-D-ribose 1-diphosphate + nicotinamide + H(+). The protein operates within cofactor biosynthesis; NAD(+) biosynthesis; nicotinamide D-ribonucleotide from 5-phospho-alpha-D-ribose 1-diphosphate and nicotinamide: step 1/1. Its function is as follows. Catalyzes the condensation of nicotinamide with 5-phosphoribosyl-1-pyrophosphate to yield nicotinamide mononucleotide, an intermediate in the biosynthesis of NAD. The sequence is that of Nicotinamide phosphoribosyltransferase from Mycoplasma genitalium (strain ATCC 33530 / DSM 19775 / NCTC 10195 / G37) (Mycoplasmoides genitalium).